A 687-amino-acid chain; its full sequence is MLLSRHRERLAANLQETAKDAGERWELSAPTFTRHCPKTARMAHPFIGVVHRINSYSSVLETYCTRHHPATPTSANPDVGTPRPSEDNVPAKPRLLESLSTYLQMRCVREDAHVSTADQLVEYQAARKTHDSLHACSVYRELQAFLVNLSSFLNGCYVPGVHWLEPFQQQLVMHTFFFLVSIKAPQKTHQLFGLFKQYFGLFETPNSVLQTFKQKASVFLIPRRHGKTWIVVAIISMLLASVENINIGYVAHQKHVANSVFAEIIKTLCRWFPPKNLNIKKENGTIIYTRPGGRSSSLMCATCFNKNSIRGQTFNLLYVDEANFIKKDALPAILGFMLQKDAKLIFISSVNSSDRSTSFLLNLRNAQEKMLNVVSYVCADHREDFHLQDALVSCPCYRLHIPTYITIDESIKTTTNLFMEGAFDTELMGEGAASSNATLYRVVGDAALTQFDMCRVDTTAQQVQKCLGKQLFVYIDPAYTNNTEASGTGVGAVVTSTQTPTRSLILGMEHFFLRDLTGAAAYEIASCACTMIKAIAVLHPTIERVNAAVEGNSSQDSGVAIATVLNEICPLPIHFLHYTDKSSALQWPIYMLGGEKSSAFETFIYALNSGTLSASQTVVSNTIKISFDPVTYLVEQVRAIKCVPLRDGGQSYSAKQKHMSDDLLVAVVMAHFMATDDRHMYKPISPQ.

Positions 67 to 91 (HHPATPTSANPDVGTPRPSEDNVPA) are disordered. Positions 221–228 (IPRRHGKT) match the Walker A motif motif. Positions 316-321 (LLYVDE) match the Walker B motif motif. The active-site For ATPase activity is the E321. Catalysis depends on for nuclease activity residues D476, E550, and D662.

It belongs to the herpesviridae TRM3 protein family. Interacts with the terminase subunits TRM1 and TRM2. Interacts with portal protein.

The protein localises to the host nucleus. Functionally, component of the molecular motor that translocates viral genomic DNA in empty capsid during DNA packaging. Forms a tripartite terminase complex together with TRM1 and TRM2 in the host cytoplasm. Once the complex reaches the host nucleus, it interacts with the capsid portal vertex. This portal forms a ring in which genomic DNA is translocated into the capsid. TRM3 carries an RNase H-like nuclease activity that plays an important role for the cleavage of concatemeric viral DNA into unit length genomes. This Human herpesvirus 8 type P (isolate GK18) (HHV-8) protein is Tripartite terminase subunit 3.